We begin with the raw amino-acid sequence, 466 residues long: tRNA-2-methylthio-N(6)-dimethylallyladenosine synthase (466 aa).

Residues 21–137 (GSYWITTFGC…LEDLLNQVDN (117 aa)) form the MTTase N-terminal domain. 6 residues coordinate [4Fe-4S] cluster: Cys-30, Cys-66, Cys-100, Cys-172, Cys-176, and Cys-179. One can recognise a Radical SAM core domain in the interval 158-395 (RDSNICAWVN…NLLVEQTAKD (238 aa)). A TRAM domain is found at 398 to 466 (TRYHNQIVEV…AFSLTGSPIQ (69 aa)).

It belongs to the methylthiotransferase family. MiaB subfamily. In terms of assembly, monomer. The cofactor is [4Fe-4S] cluster.

It is found in the cytoplasm. It carries out the reaction N(6)-dimethylallyladenosine(37) in tRNA + (sulfur carrier)-SH + AH2 + 2 S-adenosyl-L-methionine = 2-methylsulfanyl-N(6)-dimethylallyladenosine(37) in tRNA + (sulfur carrier)-H + 5'-deoxyadenosine + L-methionine + A + S-adenosyl-L-homocysteine + 2 H(+). Functionally, catalyzes the methylthiolation of N6-(dimethylallyl)adenosine (i(6)A), leading to the formation of 2-methylthio-N6-(dimethylallyl)adenosine (ms(2)i(6)A) at position 37 in tRNAs that read codons beginning with uridine. The protein is tRNA-2-methylthio-N(6)-dimethylallyladenosine synthase of Prochlorococcus marinus (strain SARG / CCMP1375 / SS120).